A 275-amino-acid chain; its full sequence is Peflin (275 aa).

8 tandem repeats follow at residues 21 to 29 (PPGGYYPGP), 31 to 39 (HGGGQYGSG), 41 to 49 (PPGGGYGAP), 50 to 59 (APGGPYGYPS), 60 to 68 (AGGVPSGTP), 76 to 84 (PPGGPYGQL), 85 to 91 (PPGGPYG), and 92 to 100 (TQPGHYGQG). 2 disordered regions span residues 21–45 (PPGGYYPGPPHGGGQYGSGLPPGGG) and 59–103 (SAGG…GGVP). The 8 X 9 AA approximate tandem repeat of [AP]-P-G-G-P-Y-G-G-P-P stretch occupies residues 21–100 (PPGGYYPGPP…GTQPGHYGQG (80 aa)). The span at 31-45 (HGGGQYGSGLPPGGG) shows a compositional bias: gly residues. Residues 59–70 (SAGGVPSGTPSG) are compositionally biased toward low complexity. EF-hand domains lie at 105-140 (NVDPEAYSWFQSVDADHSGYISLKELKQALVNSNWS), 146-174 (TCLMMINMFDKTKSGRIDVAGFSALWKFL), 172-207 (KFLQQWRNLFQQYDRDRSGSISSTELQQALSQMGYN), 208-244 (LSPQFTQLLVSRYCARSAIPAMQLDCFIKVCTQLQVL), and 245-274 (TEAFREKDTAVQGNIRLSFEDFVTMTASRM). Ca(2+) contacts are provided by D118, D120, S122, Y124, and E129. 5 residues coordinate Ca(2+): D185, D187, S189, S191, and E196. A required for interaction with PDCD6 region spans residues 195–275 (TELQQALSQM…FVTMTASRML (81 aa)).

In terms of assembly, heterodimer; heterodimerizes (via the EF-hand 5) with PDCD6. Dissociates from PDCD6 in presence of calcium. Ubiquitinated by the BCR(KLHL12) E3 ubiquitin ligase complex.

It is found in the cytoplasm. The protein resides in the endoplasmic reticulum. Its subcellular location is the membrane. It localises to the cytoplasmic vesicle. The protein localises to the COPII-coated vesicle membrane. Calcium-binding protein that acts as an adapter that bridges unrelated proteins or stabilizes weak protein-protein complexes in response to calcium. Together with PDCD6, acts as a calcium-dependent adapter for the BCR(KLHL12) complex, a complex involved in endoplasmic reticulum (ER)-Golgi transport by regulating the size of COPII coats. In response to cytosolic calcium increase, the heterodimer formed with PDCD6 interacts with, and bridges together the BCR(KLHL12) complex and SEC31 (SEC31A or SEC31B), promoting monoubiquitination of SEC31 and subsequent collagen export, which is required for neural crest specification. Its role in the heterodimer formed with PDCD6 is however unclear: some evidence shows that PEF1 and PDCD6 work together and promote association between PDCD6 and SEC31 in presence of calcium. Other reports show that PEF1 dissociates from PDCD6 in presence of calcium, and may act as a negative regulator of PDCD6. Also acts as a negative regulator of ER-Golgi transport; possibly by inhibiting interaction between PDCD6 and SEC31. This chain is Peflin, found in Mus musculus (Mouse).